Reading from the N-terminus, the 476-residue chain is ATP synthase subunit beta, mitochondrial (476 aa).

156–163 (GAGVGKTV) serves as a coordination point for ATP.

In terms of assembly, F-type ATP synthases have 2 components, the catalytic core F(1) and the membrane-embedded component F(0), linked together by a central stalk and a peripheral stalk. The central stalk, also called rotor shaft, is often seen as part of F(1). The peripheral stalk is seen as part of F(0). F(0) contains the membrane channel next to the rotor. F-type ATP synthases form dimers but each monomer functions independently in ATP generation. The dimer consists of 18 different polypeptides: ATP1 (subunit alpha, part of F(1), 3 molecules per monomer), ATP2 (subunit beta, part of F(1), 3 molecules per monomer), ATP3 (subunit gamma, part of the central stalk), ATP4 (subunit b, part of the peripheral stalk), ATP5/OSCP (subunit 5/OSCP, part of the peripheral stalk), ATP6 (subunit a, part of the peripheral stalk), ATP7 (subunit d, part of the peripheral stalk), ATP8 (subunit 8, part of the peripheral stalk), OLI1 (subunit c, part of the rotor, 10 molecules per monomer), ATP14 (subunit h, part of the peripheral stalk), ATP15 (subunit epsilon, part of the central stalk), ATP16 (subunit delta, part of the central stalk), ATP17 (subunit f, part of the peripheral stalk), ATP18 (subunit i/j, part of the peripheral stalk). Dimer-specific subunits are ATP19 (subunit k, at interface between monomers), ATP20 (subunit g, at interface between monomers), TIM11 (subunit e, at interface between monomers). Also contains subunit L.

It localises to the mitochondrion inner membrane. The enzyme catalyses ATP + H2O + 4 H(+)(in) = ADP + phosphate + 5 H(+)(out). Its function is as follows. Mitochondrial membrane ATP synthase (F(1)F(0) ATP synthase or Complex V) produces ATP from ADP in the presence of a proton gradient across the membrane which is generated by electron transport complexes of the respiratory chain. F-type ATP synthases consist of two structural domains, F(1) - containing the extramembraneous catalytic core, and F(0) - containing the membrane proton channel, linked together by a central stalk and a peripheral stalk. During catalysis, ATP synthesis in the catalytic domain of F(1) is coupled via a rotary mechanism of the central stalk subunits to proton translocation. Subunits alpha/ATP1 and beta/ATP2 form the catalytic core in F(1). Rotation of the central stalk against the surrounding alpha/ATP1(3)beta/ATP2(3) subunits leads to hydrolysis of ATP in three separate catalytic sites on the beta/ATP2 subunits. This Pichia angusta (Yeast) protein is ATP synthase subunit beta, mitochondrial.